Here is a 153-residue protein sequence, read N- to C-terminus: Large ribosomal subunit protein uL15 (153 aa).

The disordered stretch occupies residues 1 to 47 (MRLHELSPAPGSRKDRKRVGRGDAGRGNYSGRGMKGQKARSGGATRP).

This sequence belongs to the universal ribosomal protein uL15 family. Part of the 50S ribosomal subunit.

Binds to the 23S rRNA. In Dehalococcoides mccartyi (strain ATCC BAA-2100 / JCM 16839 / KCTC 5957 / BAV1), this protein is Large ribosomal subunit protein uL15.